A 337-amino-acid chain; its full sequence is Dihydroorotate dehydrogenase (quinone) (337 aa).

FMN-binding positions include 62 to 66 (AGLDK) and Thr86. Residue Lys66 participates in substrate binding. Residue 111–115 (NRMGF) coordinates substrate. Residues Asn140 and Asn173 each coordinate FMN. Asn173 contributes to the substrate binding site. Residue Ser176 is the Nucleophile of the active site. Substrate is bound at residue Asn178. FMN contacts are provided by Lys218 and Thr246. 247-248 (NT) contacts substrate. FMN is bound by residues Gly269, Gly298, and 319 to 320 (YS).

Belongs to the dihydroorotate dehydrogenase family. Type 2 subfamily. In terms of assembly, monomer. FMN is required as a cofactor.

The protein resides in the cell membrane. It carries out the reaction (S)-dihydroorotate + a quinone = orotate + a quinol. Its pathway is pyrimidine metabolism; UMP biosynthesis via de novo pathway; orotate from (S)-dihydroorotate (quinone route): step 1/1. In terms of biological role, catalyzes the conversion of dihydroorotate to orotate with quinone as electron acceptor. The sequence is that of Dihydroorotate dehydrogenase (quinone) from Wigglesworthia glossinidia brevipalpis.